The following is a 299-amino-acid chain: Proline iminopeptidase (299 aa).

Residues 26–272 (VLLLAGGPGF…QFLYCANGSH (247 aa)) enclose the AB hydrolase-1 domain. The Nucleophile role is filled by Ser103. Asp245 is an active-site residue. His272 (proton donor) is an active-site residue.

This sequence belongs to the peptidase S33 family. As to quaternary structure, monomer.

The enzyme catalyses Release of N-terminal proline from a peptide.. Releases the N-terminal proline from various substrates. The polypeptide is Proline iminopeptidase (Chitinophaga pinensis (strain ATCC 43595 / DSM 2588 / LMG 13176 / NBRC 15968 / NCIMB 11800 / UQM 2034)).